A 208-amino-acid polypeptide reads, in one-letter code: Na(+)-translocating NADH-quinone reductase subunit D (208 aa).

5 helical membrane passes run 42-62, 70-90, 103-123, 131-151, and 178-198; these read IVMT…ISLI, VRII…DQIL, VFVG…AFAM, FVDG…VAFI, and NGLF…IWGI.

The protein belongs to the NqrDE/RnfAE family. Composed of six subunits; NqrA, NqrB, NqrC, NqrD, NqrE and NqrF.

Its subcellular location is the cell inner membrane. The enzyme catalyses a ubiquinone + n Na(+)(in) + NADH + H(+) = a ubiquinol + n Na(+)(out) + NAD(+). Functionally, NQR complex catalyzes the reduction of ubiquinone-1 to ubiquinol by two successive reactions, coupled with the transport of Na(+) ions from the cytoplasm to the periplasm. NqrA to NqrE are probably involved in the second step, the conversion of ubisemiquinone to ubiquinol. In Pasteurella multocida (strain Pm70), this protein is Na(+)-translocating NADH-quinone reductase subunit D.